The sequence spans 310 residues: Ribosomal RNA small subunit methyltransferase H (310 aa).

Residues Gly32–His34, Asp52, Phe79, Asp100, and Gln107 contribute to the S-adenosyl-L-methionine site.

Belongs to the methyltransferase superfamily. RsmH family.

Its subcellular location is the cytoplasm. The enzyme catalyses cytidine(1402) in 16S rRNA + S-adenosyl-L-methionine = N(4)-methylcytidine(1402) in 16S rRNA + S-adenosyl-L-homocysteine + H(+). Its function is as follows. Specifically methylates the N4 position of cytidine in position 1402 (C1402) of 16S rRNA. In Bacillus thuringiensis subsp. konkukian (strain 97-27), this protein is Ribosomal RNA small subunit methyltransferase H.